The sequence spans 635 residues: Threonine--tRNA ligase (635 aa).

The TGS domain maps to 1 to 61 (MIKITLKDGS…ENDCTLNLLT (61 aa)). The interval 242–532 (DHRKLGRELD…LTEHYAGAFP (291 aa)) is catalytic. Zn(2+)-binding residues include Cys-333, His-384, and His-509.

It belongs to the class-II aminoacyl-tRNA synthetase family. As to quaternary structure, homodimer. The cofactor is Zn(2+).

The protein resides in the cytoplasm. The catalysed reaction is tRNA(Thr) + L-threonine + ATP = L-threonyl-tRNA(Thr) + AMP + diphosphate + H(+). Functionally, catalyzes the attachment of threonine to tRNA(Thr) in a two-step reaction: L-threonine is first activated by ATP to form Thr-AMP and then transferred to the acceptor end of tRNA(Thr). Also edits incorrectly charged L-seryl-tRNA(Thr). In Acetivibrio thermocellus (strain ATCC 27405 / DSM 1237 / JCM 9322 / NBRC 103400 / NCIMB 10682 / NRRL B-4536 / VPI 7372) (Clostridium thermocellum), this protein is Threonine--tRNA ligase.